Reading from the N-terminus, the 326-residue chain is MAFTWIRHHILGLEDWQPEEYQTLLQTASSFREVLSRRTKKVPALQGQVVTNLFFEPSTRTRSSFELAAKRLSADVLNFAPGSSSLTKGETILDTALTYVAMGTDIFVIRHQQSGVPDLIAGEMDRLESGVSILNAGDGQHEHPSQGLLDLFTICCLLDEENPRLELLEGKKIAIVGDILHSRVARSNIWSLTTAGAEVHLSAPPTLLPKYFGELCDRLFLHWDLEPALEKADFVMTLRLQKERMTANLLPSLREYHQSFGITRPRLQSCQPGVKVLHPGPVNRGVEISSDLMDDPDFSLISQQVTSGVAVRMALLYLIGNLRSDQ.

2 residues coordinate carbamoyl phosphate: R60 and T61. K88 serves as a coordination point for L-aspartate. Positions 110, 143, and 146 each coordinate carbamoyl phosphate. The L-aspartate site is built by R183 and R239. The carbamoyl phosphate site is built by G280 and P281.

The protein belongs to the aspartate/ornithine carbamoyltransferase superfamily. ATCase family. As to quaternary structure, heterododecamer (2C3:3R2) of six catalytic PyrB chains organized as two trimers (C3), and six regulatory PyrI chains organized as three dimers (R2).

The catalysed reaction is carbamoyl phosphate + L-aspartate = N-carbamoyl-L-aspartate + phosphate + H(+). It participates in pyrimidine metabolism; UMP biosynthesis via de novo pathway; (S)-dihydroorotate from bicarbonate: step 2/3. Catalyzes the condensation of carbamoyl phosphate and aspartate to form carbamoyl aspartate and inorganic phosphate, the committed step in the de novo pyrimidine nucleotide biosynthesis pathway. In Microcystis aeruginosa (strain NIES-843 / IAM M-2473), this protein is Aspartate carbamoyltransferase catalytic subunit.